The sequence spans 405 residues: Terpene cyclase pbrA (405 aa).

6 residues coordinate Mg(2+): aspartate 103, glutamate 168, asparagine 229, serine 233, glutamate 237, and aspartate 241. Residues 103 to 108 (DDEISS) carry the D(D/E)XX(D/E) motif motif. An NSE motif motif is present at residues 227-237 (LVNDLFSFYKE). Positions 316-323 (EDLGGSSA) match the WxxxxxRY motif motif.

It belongs to the trichodiene synthase family. Mg(2+) serves as cofactor.

The protein operates within secondary metabolite biosynthesis; terpenoid biosynthesis. In terms of biological role, terpene cyclase; part of the gene cluster that mediates the biosynthesis of the sesquiterpenoid aspterric acid (AA), an inhibitor of dihydroxy-acid dehydratase (DHAD) effective as an herbicide. PbrA cyclizes farnesyl diphosphate (FPP) to produce (-)-daucane. The cytochrome P450 monooxygenase pbrBB then converts (-)-daucane into the alpha-epoxy carboxylate intermediate which is further converted into the tricyclic aspterric acid by the cytochrome P450 monooxygenase pbrC. This chain is Terpene cyclase pbrA, found in Penicillium brasilianum.